Reading from the N-terminus, the 351-residue chain is Protein RecA (351 aa).

67–74 contacts ATP; the sequence is GPESSGKT.

This sequence belongs to the RecA family.

The protein localises to the cytoplasm. Can catalyze the hydrolysis of ATP in the presence of single-stranded DNA, the ATP-dependent uptake of single-stranded DNA by duplex DNA, and the ATP-dependent hybridization of homologous single-stranded DNAs. It interacts with LexA causing its activation and leading to its autocatalytic cleavage. This Mannheimia succiniciproducens (strain KCTC 0769BP / MBEL55E) protein is Protein RecA.